The following is a 359-amino-acid chain: Aromatic amino acid aminotransferase (359 aa).

Residues 1–42 form a disordered region; sequence MSERKPPYLRSALDSIPPYRPGRKVVGPDGRSAKLSSNESPF. The residue at position 223 (Lys223) is an N6-(pyridoxal phosphate)lysine.

This sequence belongs to the class-II pyridoxal-phosphate-dependent aminotransferase family. As to quaternary structure, homodimer. It depends on pyridoxal 5'-phosphate as a cofactor.

It catalyses the reaction an aromatic L-alpha-amino acid + 2-oxoglutarate = an aromatic oxo-acid + L-glutamate. In terms of biological role, aminotransferase that catalyzes the conversion of aromatic amino acids and 2-oxoglutarate into corresponding aromatic oxo acids and L-glutamate. The polypeptide is Aromatic amino acid aminotransferase (Thermobifida fusca (strain YX)).